Here is a 506-residue protein sequence, read N- to C-terminus: Maturase K (506 aa).

It belongs to the intron maturase 2 family. MatK subfamily.

It localises to the plastid. The protein resides in the chloroplast. Usually encoded in the trnK tRNA gene intron. Probably assists in splicing its own and other chloroplast group II introns. The polypeptide is Maturase K (Mentzelia lindleyi (Blazing star)).